Consider the following 506-residue polypeptide: ATP synthase subunit alpha, chloroplastic (506 aa).

Residue Gly-172 to Thr-179 coordinates ATP.

Belongs to the ATPase alpha/beta chains family. F-type ATPases have 2 components, CF(1) - the catalytic core - and CF(0) - the membrane proton channel. CF(1) has five subunits: alpha(3), beta(3), gamma(1), delta(1), epsilon(1). CF(0) has four main subunits: a, b, b' and c.

The protein resides in the plastid. Its subcellular location is the chloroplast thylakoid membrane. The enzyme catalyses ATP + H2O + 4 H(+)(in) = ADP + phosphate + 5 H(+)(out). In terms of biological role, produces ATP from ADP in the presence of a proton gradient across the membrane. The alpha chain is a regulatory subunit. This chain is ATP synthase subunit alpha, chloroplastic, found in Pleurastrum terricola (Filamentous green alga).